We begin with the raw amino-acid sequence, 584 residues long: Myo-inositol transporter 1 (584 aa).

Residues methionine 1–serine 81 are Cytoplasmic-facing. At threonine 12 the chain carries Phosphothreonine. The segment at serine 13–isoleucine 42 is disordered. 5 positions are modified to phosphoserine: serine 26, serine 31, serine 35, serine 37, and serine 46. Residues asparagine 30 to isoleucine 42 are compositionally biased toward basic and acidic residues. Residues leucine 82–tyrosine 102 form a helical membrane-spanning segment. At aspartate 103 to glutamate 129 the chain is on the extracellular side. Residues isoleucine 130–alanine 150 traverse the membrane as a helical segment. Residues aspartate 151–asparagine 163 lie on the Cytoplasmic side of the membrane. A helical membrane pass occupies residues leucine 164–valine 184. The Extracellular portion of the chain corresponds to glycine 185–arginine 186. A helical membrane pass occupies residues leucine 187–isoleucine 207. Residues alanine 208 to arginine 215 are Cytoplasmic-facing. A helical transmembrane segment spans residues leucine 216 to alanine 236. Residues glycine 237–arginine 246 lie on the Extracellular side of the membrane. Residues isoleucine 247–proline 267 traverse the membrane as a helical segment. Residues aspartate 268 to glutamine 349 lie on the Cytoplasmic side of the membrane. A helical membrane pass occupies residues phenylalanine 350–lysine 370. N-linked (GlcNAc...) asparagine glycosylation is present at asparagine 371. The Extracellular portion of the chain corresponds to asparagine 371–serine 376. Residues isoleucine 377–isoleucine 397 traverse the membrane as a helical segment. Topologically, residues glycine 398–arginine 400 are cytoplasmic. The chain crosses the membrane as a helical span at residues threonine 401–phenylalanine 421. At histidine 422–serine 441 the chain is on the extracellular side. The helical transmembrane segment at serine 442–isoleucine 462 threads the bilayer. At glycine 463–threonine 486 the chain is on the cytoplasmic side. The chain crosses the membrane as a helical span at residues alanine 487–isoleucine 507. At threonine 508–alanine 510 the chain is on the extracellular side. Residues glycine 511–tyrosine 531 form a helical membrane-spanning segment. Residues proline 532–isoleucine 584 lie on the Cytoplasmic side of the membrane. Lysine 573 is covalently cross-linked (Glycyl lysine isopeptide (Lys-Gly) (interchain with G-Cter in ubiquitin)).

The protein belongs to the major facilitator superfamily. Sugar transporter (TC 2.A.1.1) family.

The protein resides in the cell membrane. It carries out the reaction myo-inositol(out) + H(+)(out) = myo-inositol(in) + H(+)(in). Functionally, major transporter for myo-inositol. This chain is Myo-inositol transporter 1 (ITR1), found in Saccharomyces cerevisiae (strain ATCC 204508 / S288c) (Baker's yeast).